The chain runs to 89 residues: Protein XhlA (89 aa).

A helical membrane pass occupies residues 63–83 (ITGAIITAVSTGIIGGAIAIM).

This sequence to B.licheniformis xpaF1 and xpaL1.

It localises to the cell membrane. Associated with cell lysis upon induction of PbsX. This is Protein XhlA (xhlA) from Bacillus subtilis (strain 168).